Consider the following 358-residue polypeptide: Alanine racemase (358 aa).

K35 (proton acceptor; specific for D-alanine) is an active-site residue. At K35 the chain carries N6-(pyridoxal phosphate)lysine. R130 provides a ligand contact to substrate. Catalysis depends on Y255, which acts as the Proton acceptor; specific for L-alanine. M303 is a binding site for substrate.

This sequence belongs to the alanine racemase family. It depends on pyridoxal 5'-phosphate as a cofactor.

It catalyses the reaction L-alanine = D-alanine. It participates in amino-acid biosynthesis; D-alanine biosynthesis; D-alanine from L-alanine: step 1/1. In terms of biological role, catalyzes the interconversion of L-alanine and D-alanine. May also act on other amino acids. This Shewanella sp. (strain MR-7) protein is Alanine racemase (alr).